The sequence spans 490 residues: Argininosuccinate lyase (490 aa).

Belongs to the lyase 1 family. Argininosuccinate lyase subfamily.

It is found in the cytoplasm. The enzyme catalyses 2-(N(omega)-L-arginino)succinate = fumarate + L-arginine. Its pathway is amino-acid biosynthesis; L-arginine biosynthesis; L-arginine from L-ornithine and carbamoyl phosphate: step 3/3. The polypeptide is Argininosuccinate lyase (Bifidobacterium longum subsp. infantis (strain ATCC 15697 / DSM 20088 / JCM 1222 / NCTC 11817 / S12)).